Here is a 119-residue protein sequence, read N- to C-terminus: uncharacterized protein (119 aa).

This is an uncharacterized protein from Orgyia pseudotsugata (Douglas-fir tussock moth).